Reading from the N-terminus, the 197-residue chain is Probable molybdenum cofactor guanylyltransferase (197 aa).

Residues 9 to 11, Lys-21, Asp-65, and Asp-94 each bind GTP; that span reads LAG. Residue Asp-94 coordinates Mg(2+).

Belongs to the MobA family. Mg(2+) is required as a cofactor.

It is found in the cytoplasm. It catalyses the reaction Mo-molybdopterin + GTP + H(+) = Mo-molybdopterin guanine dinucleotide + diphosphate. Functionally, transfers a GMP moiety from GTP to Mo-molybdopterin (Mo-MPT) cofactor (Moco or molybdenum cofactor) to form Mo-molybdopterin guanine dinucleotide (Mo-MGD) cofactor. This chain is Probable molybdenum cofactor guanylyltransferase, found in Carboxydothermus hydrogenoformans (strain ATCC BAA-161 / DSM 6008 / Z-2901).